We begin with the raw amino-acid sequence, 144 residues long: 3-hydroxyacyl-[acyl-carrier-protein] dehydratase FabZ (144 aa).

H51 is an active-site residue.

The protein belongs to the thioester dehydratase family. FabZ subfamily.

The protein resides in the cytoplasm. It catalyses the reaction a (3R)-hydroxyacyl-[ACP] = a (2E)-enoyl-[ACP] + H2O. In terms of biological role, involved in unsaturated fatty acids biosynthesis. Catalyzes the dehydration of short chain beta-hydroxyacyl-ACPs and long chain saturated and unsaturated beta-hydroxyacyl-ACPs. This Clostridium botulinum (strain Langeland / NCTC 10281 / Type F) protein is 3-hydroxyacyl-[acyl-carrier-protein] dehydratase FabZ.